Here is a 226-residue protein sequence, read N- to C-terminus: GTP-binding nuclear protein Ran-3 (226 aa).

Positions 14-178 constitute a Small GTPase Ran-type domain; it reads GYPSFKLILV…LYLARKLTGD (165 aa). A GTP-binding site is contributed by 25–32; that stretch reads DGGTGKTT. Residues 44–52 are switch-I; the sequence is KRYEPTIGV. GTP is bound by residues glycine 75, 129–132, and 157–159; these read NKVD and SAK. A switch-II region spans residues 75 to 91; it reads GQEKFGGLRDGYYIHGH.

This sequence belongs to the small GTPase superfamily. Ran family. As to quaternary structure, found in a nuclear export complex with RanGTP, exportin and pre-miRNA.

The protein localises to the nucleus. Its function is as follows. GTP-binding protein involved in nucleocytoplasmic transport. Required for the import of protein into the nucleus and also for RNA export. Involved in chromatin condensation and control of cell cycle. The chain is GTP-binding nuclear protein Ran-3 (RAN3) from Oryza sativa subsp. indica (Rice).